We begin with the raw amino-acid sequence, 173 residues long: Nuclear transcription factor Y subunit B-8 (173 aa).

The tract at residues 1 to 30 (MAESQAKSPGGCGSHESGGDQSPRSLHVRE) is disordered. At alanine 2 the chain carries N-acetylalanine. The DNA-binding element occupies 35–41 (LPIANIS). The segment at 62–73 (VQECVSEFISFV) is subunit association domain (SAD). The tract at residues 123–173 (DTKGSAKGGDPNAKKDGQSSQNGQFSQLAHQGPYGNSQAQQHMMVPMPGTD) is disordered. Residues 140 to 163 (QSSQNGQFSQLAHQGPYGNSQAQQ) are compositionally biased toward polar residues.

Belongs to the NFYB/HAP3 subunit family. Heterotrimeric transcription factor composed of three components, NF-YA, NF-YB and NF-YC. NF-YB and NF-YC must interact and dimerize for NF-YA association and DNA binding. As to expression, expressed in flowers and mature rosettes.

Its subcellular location is the nucleus. Functionally, component of the NF-Y/HAP transcription factor complex. The NF-Y complex stimulates the transcription of various genes by recognizing and binding to a CCAAT motif in promoters. The polypeptide is Nuclear transcription factor Y subunit B-8 (NFYB8) (Arabidopsis thaliana (Mouse-ear cress)).